A 560-amino-acid polypeptide reads, in one-letter code: Nibrin homolog (560 aa).

The 63-residue stretch at 25-87 folds into the FHA domain; it reads YKVGRKDCDV…YGTFFNKVQG (63 aa). The region spanning 115–190 is the BRCT domain; the sequence is TFRLSFVPIV…KQIVLGDWFK (76 aa).

It belongs to the Nibrin family. As to quaternary structure, component of the MRN complex composed of two heterodimers RAD50 and MRE11 associated with a single NBS1. As to expression, mostly expressed in the shoot apex and young flower, but also in young leaves, root tips and stamen, tissues where frequent cell division or meiosis may occur.

The protein resides in the nucleus. It localises to the chromosome. Component of the MRN complex, which plays a central role in double-strand break (DSB) repair, DNA recombination, maintenance of telomere integrity and meiosis. The MRN complex is involved in the repair of DNA double-strand breaks (DSBs) via homologous recombination (HR), an error-free mechanism which primarily occurs during S and G2 phases. The complex (1) mediates the end resection of damaged DNA, which generates proper single-stranded DNA, a key initial steps in HR, and is (2) required for the recruitment of other repair factors and efficient activation of ATM and ATR upon DNA damage. The MRN complex possesses single-strand endonuclease activity and double-strand-specific 3'-5' exonuclease activity, which are provided by MRE11, to initiate end resection, which is required for single-strand invasion and recombination. Within the MRN complex, NBS1 acts as a protein-protein adapter, which specifically recognizes and binds phosphorylated proteins, promoting their recruitment to DNA damage sites. Recruits MRE11 and RAD50 components of the MRN complex to DSBs in response to DNA damage. The polypeptide is Nibrin homolog (Oryza sativa subsp. japonica (Rice)).